Consider the following 460-residue polypeptide: Armadillo repeat-containing protein LFR (460 aa).

The disordered stretch occupies residues 1 to 30 (MQKRELGKSGGNSGGSSGPPAKRGRPFGST). Residues 8–17 (KSGGNSGGSS) show a composition bias toward gly residues. 3 ARM repeats span residues 227–269 (DNEV…NLAH), 323–362 (NEPFISPLIPQIHKRLIDLLSIQAVDAQAAAVGALYNLVE), and 366–407 (DCRL…NLVS).

As to quaternary structure, interacts with AS2. In terms of tissue distribution, expressed in roots, leaves, stems and flowers.

The protein resides in the nucleus. Functionally, involved in leaf and flower development. Plays roles in leaf development partly by associating with AS2 and repressing KNAT1/BP transcription. Required for the formation of anther cell layers and normal expression of genes that regulates anther development. This Arabidopsis thaliana (Mouse-ear cress) protein is Armadillo repeat-containing protein LFR.